The chain runs to 265 residues: Transcriptional activator AggR (265 aa).

Positions 164-261 (DKVRNTIEKD…GITPKQFLTY (98 aa)) constitute an HTH araC/xylS-type domain. 2 consecutive DNA-binding regions (H-T-H motif) follow at residues 181-202 (AIIADEFNVSEITIRKRLESEY) and 228-251 (ISQISNMIGFSSTSYFIRLFVKHF).

In terms of assembly, homodimer.

Transcriptional activator of aggregative adherence fimbria I expression in enteroaggregative E.coli. This is Transcriptional activator AggR (aggR) from Escherichia coli.